The primary structure comprises 238 residues: 7-cyano-7-deazaguanine synthase 1 (238 aa).

An ATP-binding site is contributed by 14-24 (FSGGQDSATCL). Zn(2+) is bound by residues Cys-202, Cys-217, Cys-220, and Cys-223.

This sequence belongs to the QueC family. The cofactor is Zn(2+).

The catalysed reaction is 7-carboxy-7-deazaguanine + NH4(+) + ATP = 7-cyano-7-deazaguanine + ADP + phosphate + H2O + H(+). Its pathway is purine metabolism; 7-cyano-7-deazaguanine biosynthesis. Its function is as follows. Catalyzes the ATP-dependent conversion of 7-carboxy-7-deazaguanine (CDG) to 7-cyano-7-deazaguanine (preQ(0)). This is 7-cyano-7-deazaguanine synthase 1 from Rhodopseudomonas palustris (strain HaA2).